Here is a 137-residue protein sequence, read N- to C-terminus: Large ribosomal subunit protein bL17 (137 aa).

The protein belongs to the bacterial ribosomal protein bL17 family. As to quaternary structure, part of the 50S ribosomal subunit. Contacts protein L32.

The protein is Large ribosomal subunit protein bL17 of Rickettsia typhi (strain ATCC VR-144 / Wilmington).